A 37-amino-acid polypeptide reads, in one-letter code: Large ribosomal subunit protein bL36c (37 aa).

It belongs to the bacterial ribosomal protein bL36 family.

The protein localises to the plastid. It is found in the chloroplast. The chain is Large ribosomal subunit protein bL36c (rpl36) from Cyanidium caldarium (Red alga).